Consider the following 195-residue polypeptide: Holliday junction branch migration complex subunit RuvA (195 aa).

The interval 1-64 is domain I; it reads MIKGVEGEIT…DRAPEIYGFK (64 aa). Positions 65–137 are domain II; the sequence is DRAEYNVFLM…LYDLVKDYAV (73 aa). A flexible linker region spans residues 137–141; it reads VEFPK. The interval 142 to 195 is domain III; the sequence is ELSDVSEDAVGALTALGFDMTSAKLAVNEVLKEQTVENTQELVRKALRKLNKTR.

It belongs to the RuvA family. As to quaternary structure, homotetramer. Forms an RuvA(8)-RuvB(12)-Holliday junction (HJ) complex. HJ DNA is sandwiched between 2 RuvA tetramers; dsDNA enters through RuvA and exits via RuvB. An RuvB hexamer assembles on each DNA strand where it exits the tetramer. Each RuvB hexamer is contacted by two RuvA subunits (via domain III) on 2 adjacent RuvB subunits; this complex drives branch migration. In the full resolvosome a probable DNA-RuvA(4)-RuvB(12)-RuvC(2) complex forms which resolves the HJ.

It localises to the cytoplasm. In terms of biological role, the RuvA-RuvB-RuvC complex processes Holliday junction (HJ) DNA during genetic recombination and DNA repair, while the RuvA-RuvB complex plays an important role in the rescue of blocked DNA replication forks via replication fork reversal (RFR). RuvA specifically binds to HJ cruciform DNA, conferring on it an open structure. The RuvB hexamer acts as an ATP-dependent pump, pulling dsDNA into and through the RuvAB complex. HJ branch migration allows RuvC to scan DNA until it finds its consensus sequence, where it cleaves and resolves the cruciform DNA. The sequence is that of Holliday junction branch migration complex subunit RuvA from Kosmotoga olearia (strain ATCC BAA-1733 / DSM 21960 / TBF 19.5.1).